Here is a 136-residue protein sequence, read N- to C-terminus: Putative LysR family substrate binding domain-containing protein YagP (136 aa).

It belongs to the LysR transcriptional regulatory family.

This chain is Putative LysR family substrate binding domain-containing protein YagP (yagP), found in Escherichia coli (strain K12).